A 1756-amino-acid chain; its full sequence is MLSFSVVKSAGSAGNYYTDKDNYYVLGSMGERWAGQGAEQLGLQGSVDKDVFTRLLEGRLPDGADLSRMQDGSNKHRPGYDLTFSAPKSVSMMAMLGGDKRLIDAHNQAVDFAVRQVEALASTRVMTDGQSETVLTGNLVMALFNHDTSRDQDPQLHTHVVVANVTQHNGEWKTLSSDKVGKTGFSENVLANRIAFGKIYQSELRQRVEALGYETEVVGKHGMWEMPGVPVEAFSSRSQAIREAVGEDASLKSRDVAALDTRKSKHHVDPEVRMAEWMQTLKETGFDIRAYRDAADQRAEIRTQAPGPASQDGPDVQQAVTQAIAGLSERKVQFTYTDVLARTVGILPPENGVIERARAGIDEAISREQLIPLDREKGLFTSGIHVLDELSVRALSRDIMKQNRVTVHPEKSVPRTAGYSDAVSVLAQDRPSLAIVSGQGGAAGQRERVAELVMMAREQGREVQIIAADRRSQLNLKQDERLSGELITGRRQLQEGMVFTSGSTFIVDQGEKLSLKETLTLLDGAARHNVQVLITDSGQRTGTGSALMAMKDAGVNTYRWQGGEQRPATIISEPDRNVRYDRLAGDFAASVKAGEESVAQVSGVREQAILTQAIRSELKTQGVLGHPEVTMTALSPVWLDSRSRYLRDMYRPGMVMEQWNPETRSHDRYVIDRVTAQSHSLTLRDAQGETQVVRISSLDSSWSLFRPEKMPVADGERLRVTGKIPGLRVSGGDRLQVASVSEDAMTVVVPGRAEPATLPVADSPFTALKLENGWVETPGHSVSDSATVFASVTQMAMDNATLNGLARSGRDVRLYSSLDETRTAEKLARHPSFTVVSEQIKARAGETSLETAISLQKTGLHTPAQQAIHLALPVLESKNLAFSMVDLLTEAKSFAAEGTGFTELGGEINAQIKRGDLLYVDVAKGYGTGLLVSRASYEAEKSILRHILEGKEAVTPLMERVPGELMETLTSGPRAATRMILETSDRFTVVQGYAGVGKTTQFRAVMSAVNMLPASERPRVVGLGPTHRAVGEMRSAGVDAQTLASFLHDTQLQQRSGETPDFSNTLFLLDESSMVGNTDMARAYALIAAGGGRAVASGDTDQLQAIAPGQPFRLQQTRSAADVVIMKEIVRQTPELREAVYSLINRDVERALSGLESVKPSQVPRQEGAWAPEHSVTEFSHSQEAKLAEAQQKAMLKGETFPDVPMTLYEAIVRDYTGRTPEAREQTLIVTHLNEDRRVLNSMIHDAREKAGELGKEQVMVPVLNTANIRDGELRRLSTWENNPDALALVDSVYHRIAGISKDDGLITLEDAEGNTRLISPREAVAEGVTLYTPDKIRVGTGDRMRFTKSDRERGYVANSVWTVTAVSGDSVTLSDGQQTRVIRPGQERAEQHIDLAYAITAHGAQGASETFAIALEGTEGNRKLMAGFESAYVALSRMKQHVQVYTDNRQGWTDAINNAVQKGTAHDVLEPKPDREVMNAQRLFSTARELRDVAAGRAVLRQAGLAGGDSPARFIAPGRKYPQPYVALPAFDRNGKSAGIWLNPLTTDDGNGLRGFSGEGRVKGSGDAQFVALQGSRNGESLLADNMQDGVRIARDNPDSGVVVRIAGEGRPWNPGAITGGRVWGDIPDSSVQPGAGNGEPVTAEVLAQRQAEEAIRRETERRADEIVRKMAENKPDLPDGKTEQAVREIAGQERDRADITEREAALPESVLRESQREQEAVREVARENLLQERLQQIERDMVRDLQKEKTLGGD.

The segment at 1-330 (MLSFSVVKSA…TQAIAGLSER (330 aa)) is DNA relaxase. Tyrosine 16 (O-(5'-phospho-DNA)-tyrosine intermediate; for relaxase activity) is an active-site residue. Tyrosine 17 (relaxase) is an active-site residue. 3 residues coordinate Mg(2+): histidine 146, histidine 157, and histidine 159. Positions 950 to 1500 (GKEAVTPLME…LRDVAAGRAV (551 aa)) are DNA helicase I. An ATP-binding site is contributed by 992–999 (GYAGVGKT). Residues 1719–1753 (EQEAVREVARENLLQERLQQIERDMVRDLQKEKTL) adopt a coiled-coil conformation.

To TraI of plasmid F. In terms of assembly, monomer. Part of the relaxosome, a complex composed of plasmid-encodes TraI, TraM, TraY and host-encoded IHF bound to the F plasmid origin of transfer (oriT). Directly contacts coupling protein TraD. Seems to directly contact TraM via its C-terminus. The cofactor is Mg(2+).

It localises to the cytoplasm. It catalyses the reaction ATP-independent breakage of single-stranded DNA, followed by passage and rejoining.. The catalysed reaction is ATP + H2O = ADP + phosphate + H(+). In terms of biological role, conjugative DNA transfer (CDT) is the unidirectional transfer of ssDNA plasmid from a donor to a recipient cell. It is the central mechanism by which antibiotic resistance and virulence factors are propagated in bacterial populations. Part of the relaxosome, which facilitates a site- and strand-specific cut in the origin of transfer by TraI, at the nic site. Relaxosome formation requires binding of IHF and TraY to the oriT region, which then facilitates binding of TraI relaxase. TraI forms a covalent 5'-phosphotyrosine intermediate linkage to the ssDNA. The transesterified T-strand moves from the donor cell to the recipient cell in a 5'to 3' direction, with the DNA helicase activity of TraI unwinding the DNA. DNA transfer occurs via the conjugative pore (transferosome) an intercellular junction mediated by a type IV secretion system, with TraD providing the means to link the relaxosome to the conjugative pore. The relaxase completes DNA transfer by reversing the covalent phosphotyrosine linkage and releasing the T-strand. Functionally, traI has also been identified as DNA helicase I. DNA. helicase I is a potent, highly processive DNA-dependent ATPase, able to unwind about 1.1 kb dsDNA per second in a 5' to 3' manner. The sequence is that of Multifunctional conjugation protein TraI (traI) from Escherichia coli.